The chain runs to 103 residues: Histone H4 (103 aa).

At lysine 6 the chain carries N6-acetyl-N6-methyllysine; alternate. An N6-methyllysine; alternate mark is found at lysine 6, lysine 9, and lysine 13. Lysine 13 bears the N6-acetyl-N6-methyllysine; alternate mark. The DNA-binding element occupies 17-21 (KRHRK). The residue at position 92 (lysine 92) is an N6-glutaryllysine.

It belongs to the histone H4 family. As to quaternary structure, the nucleosome is a histone octamer containing two molecules each of H2A, H2B, H3 and H4 assembled in one H3-H4 heterotetramer and two H2A-H2B heterodimers. The octamer wraps approximately 147 bp of DNA. In terms of processing, glutarylation at Lys-92 (H4K91glu) destabilizes nucleosomes by promoting dissociation of the H2A-H2B dimers from nucleosomes.

It is found in the nucleus. It localises to the chromosome. In terms of biological role, core component of nucleosome. Nucleosomes wrap and compact DNA into chromatin, limiting DNA accessibility to the cellular machineries which require DNA as a template. Histones thereby play a central role in transcription regulation, DNA repair, DNA replication and chromosomal stability. DNA accessibility is regulated via a complex set of post-translational modifications of histones, also called histone code, and nucleosome remodeling. The polypeptide is Histone H4 (ahsb4) (Blastobotrys adeninivorans (Yeast)).